The following is a 778-amino-acid chain: Subtilisin-like protease SBT3.6 (778 aa).

The first 22 residues, 1–22 (MMNYRTSIYVVLSLVIFLNVQR), serve as a signal peptide directing secretion. Positions 23 to 113 (SFVAESSAKR…VIPDSFYKLA (91 aa)) are cleaved as a propeptide — activation peptide. Positions 34 to 113 (VHIVYLGEKQ…VIPDSFYKLA (80 aa)) constitute an Inhibitor I9 domain. The N-linked (GlcNAc...) asparagine glycan is linked to Asn69. The Peptidase S8 domain maps to 117–625 (TWDYLGLSAA…GGLVNPEKSA (509 aa)). Asp147 acts as the Charge relay system in catalysis. Asn158, Asn180, Asn202, and Asn206 each carry an N-linked (GlcNAc...) asparagine glycan. His222 acts as the Charge relay system in catalysis. Residues Asn237, Asn399, Asn414, and Asn541 are each glycosylated (N-linked (GlcNAc...) asparagine). Residues 388–483 (SLVYPENPGN…ELGTDILLYT (96 aa)) form the PA domain. Catalysis depends on Ser556, which acts as the Charge relay system. Asn648, Asn724, and Asn759 each carry an N-linked (GlcNAc...) asparagine glycan.

Belongs to the peptidase S8 family.

Its subcellular location is the secreted. This chain is Subtilisin-like protease SBT3.6, found in Arabidopsis thaliana (Mouse-ear cress).